A 271-amino-acid chain; its full sequence is Calcium-binding protein 4 (271 aa).

The segment at Met1–Gln105 is disordered. A Phosphoserine; by PKC/PRKCZ modification is found at Ser37. Over residues Gly45–Lys67 the composition is skewed to low complexity. Over residues Ala87–Arg96 the composition is skewed to basic residues. EF-hand domains are found at residues Glu125 to Met160, Gly179 to Glu196, Leu202 to Glu237, and Leu239 to Gly271. Positions 138, 140, 142, 144, and 149 each coordinate Ca(2+). Ca(2+) is bound by residues Asp215, Asp217, Asp219, Arg221, Glu226, Asp252, Asn254, Asp256, Thr258, and Glu263.

In terms of assembly, interacts with CACNA1F and CACNA1D (via IQ domain) in a calcium independent manner. Interacts (via N-terminus) with UNC119. In terms of processing, phosphorylated. Phosphorylation levels change with the light conditions and regulate the activity, but has no effect on calcium binding. As to expression, expressed in retina and in the inner hair cells (IHC) of the cochlea.

It localises to the cytoplasm. The protein localises to the presynapse. Its function is as follows. Involved in normal synaptic function through regulation of Ca(2+) influx and neurotransmitter release in photoreceptor synaptic terminals and in auditory transmission. Modulator of CACNA1D and CACNA1F, suppressing the calcium-dependent inactivation and shifting the activation range to more hyperpolarized voltages. This Mus musculus (Mouse) protein is Calcium-binding protein 4 (Cabp4).